The sequence spans 203 residues: ATP synthase subunit b (203 aa).

Residues 14 to 34 traverse the membrane as a helical segment; the sequence is FVWPLLGAGLLLAAEGVAWAS.

This sequence belongs to the ATPase B chain family. In terms of assembly, F-type ATPases have 2 components, F(1) - the catalytic core - and F(0) - the membrane proton channel. F(1) has five subunits: alpha(3), beta(3), gamma(1), delta(1), epsilon(1). F(0) has three main subunits: a(1), b(2) and c(10-14). The alpha and beta chains form an alternating ring which encloses part of the gamma chain. F(1) is attached to F(0) by a central stalk formed by the gamma and epsilon chains, while a peripheral stalk is formed by the delta and b chains.

It localises to the cell inner membrane. In terms of biological role, f(1)F(0) ATP synthase produces ATP from ADP in the presence of a proton or sodium gradient. F-type ATPases consist of two structural domains, F(1) containing the extramembraneous catalytic core and F(0) containing the membrane proton channel, linked together by a central stalk and a peripheral stalk. During catalysis, ATP synthesis in the catalytic domain of F(1) is coupled via a rotary mechanism of the central stalk subunits to proton translocation. Its function is as follows. Component of the F(0) channel, it forms part of the peripheral stalk, linking F(1) to F(0). This is ATP synthase subunit b from Syntrophobacter fumaroxidans (strain DSM 10017 / MPOB).